A 285-amino-acid polypeptide reads, in one-letter code: Nurim (285 aa).

Residues 1 to 16 (MSANVQVSGQLSSGPS) lie on the Nuclear side of the membrane. A helical membrane pass occupies residues 17–44 (LPACIVLSAVSLLCFVAGFGTGAEFVRF). The Perinuclear space portion of the chain corresponds to 45 to 74 (LSFGAIFRNISGGLDGEIPLTWSEAIRNTQ). Residues 75–96 (FQCCIGIDIGLLFLFVLQHSLM) form a helical membrane-spanning segment. At 97–113 (AWTAVKKNVLHVFGVLQ) the chain is on the nuclear side. The helical transmembrane segment at 114–130 (RSIYILCTALSLQVLMR) threads the bilayer. Over 131–149 (FWQPCPHGPYLWNVSSDPW) the chain is Perinuclear space. A helical membrane pass occupies residues 150–180 (SAWLPLLCALVHTISWLLIFSVLLIFDYAEL). The Nuclear segment spans residues 181–207 (MGIKQVYYFCLGMGDPLSHKSPRVARL). The helical transmembrane segment at 208-226 (YAHLRHPIYLELLLILWAV) threads the bilayer. Topologically, residues 227–232 (PCLPPD) are perinuclear space. Residues 233-250 (RLILAIFFTLYLSLVHRL) traverse the membrane as a helical segment. Over 251-285 (DVQDYAYLRSQLEKKFLLFSREEASAVGGQIRKNN) the chain is Nuclear.

This sequence belongs to the nurim family.

It is found in the nucleus inner membrane. The polypeptide is Nurim (nrm) (Xenopus laevis (African clawed frog)).